We begin with the raw amino-acid sequence, 255 residues long: Small ribosomal subunit protein eS1 (255 aa).

Residues M1 to K18 show a composition bias toward basic residues. A disordered region spans residues M1–D28. A2 carries the N-acetylalanine; partial modification. Residues R19–D28 are compositionally biased toward basic and acidic residues.

The protein belongs to the eukaryotic ribosomal protein eS1 family. As to quaternary structure, component of the small ribosomal subunit. Mature ribosomes consist of a small (40S) and a large (60S) subunit. The 40S subunit contains about 33 different proteins and 1 molecule of RNA (18S). The 60S subunit contains about 49 different proteins and 3 molecules of RNA (25S, 5.8S and 5S).

The protein resides in the cytoplasm. The polypeptide is Small ribosomal subunit protein eS1 (Ajellomyces capsulatus (strain NAm1 / WU24) (Darling's disease fungus)).